The primary structure comprises 307 residues: Methionyl-tRNA formyltransferase (307 aa).

Residue 108–111 participates in (6S)-5,6,7,8-tetrahydrofolate binding; that stretch reads SLLP.

Belongs to the Fmt family.

The catalysed reaction is L-methionyl-tRNA(fMet) + (6R)-10-formyltetrahydrofolate = N-formyl-L-methionyl-tRNA(fMet) + (6S)-5,6,7,8-tetrahydrofolate + H(+). Functionally, attaches a formyl group to the free amino group of methionyl-tRNA(fMet). The formyl group appears to play a dual role in the initiator identity of N-formylmethionyl-tRNA by promoting its recognition by IF2 and preventing the misappropriation of this tRNA by the elongation apparatus. This is Methionyl-tRNA formyltransferase from Xanthomonas axonopodis pv. citri (strain 306).